A 2226-amino-acid polypeptide reads, in one-letter code: Rotatin (2226 aa).

Residues 295–346 are disordered; that stretch reads EARGPYHSPNPSPGSSSSRPSVVGRTGQRPRGDGQDWDAVSSSGSSSHTHVN. Residues 307 to 319 show a composition bias toward low complexity; that stretch reads PGSSSSRPSVVGR. S311 carries the phosphoserine modification. An N6-acetyllysine modification is found at K813.

The protein belongs to the rotatin family. In terms of assembly, interacts with PPP1R35; this interaction allows the mutual recruitment to the centriole.

Its subcellular location is the cytoplasm. It localises to the cytoskeleton. The protein resides in the cilium basal body. Its function is as follows. Involved in the genetic cascade that governs left-right specification. Required for correct asymmetric expression of NODAL, LEFTY and PITX2. The sequence is that of Rotatin from Mus musculus (Mouse).